The sequence spans 62 residues: Paralithocin 1 (62 aa).

The signal sequence occupies residues 1–23; sequence MGPMKVLLVLLVVMVAAPHIADA. 4 disulfide bridges follow: Cys-29-Cys-55, Cys-33-Cys-51, Cys-37-Cys-49, and Cys-42-Cys-52. Tyr-61 carries the tyrosine amide; partial modification.

This sequence belongs to the paralithocin family. In terms of processing, the amidated form is probably the active form.

Functionally, has weak antibacterial activity, mainly against marine Gram-positive bacteria like C.maltaromaticum (MIC=200 uM), C.mobile (MIC=100 uM), C.divergens (MIC=200 uM) and C.funditum (MIC=200 uM) but also against C.glutamicum (MIC=50 uM). Has very little or no activity against Gram-negative bacteria. The polypeptide is Paralithocin 1 (Paralithodes camtschaticus (Red king crab)).